Consider the following 502-residue polypeptide: ATP synthase subunit alpha (502 aa).

Residue 169-176 coordinates ATP; it reads GDRQTGKT.

Belongs to the ATPase alpha/beta chains family. F-type ATPases have 2 components, CF(1) - the catalytic core - and CF(0) - the membrane proton channel. CF(1) has five subunits: alpha(3), beta(3), gamma(1), delta(1), epsilon(1). CF(0) has three main subunits: a(1), b(2) and c(9-12). The alpha and beta chains form an alternating ring which encloses part of the gamma chain. CF(1) is attached to CF(0) by a central stalk formed by the gamma and epsilon chains, while a peripheral stalk is formed by the delta and b chains.

It is found in the cell membrane. The catalysed reaction is ATP + H2O + 4 H(+)(in) = ADP + phosphate + 5 H(+)(out). Its function is as follows. Produces ATP from ADP in the presence of a proton gradient across the membrane. The alpha chain is a regulatory subunit. This Desulfitobacterium hafniense (strain DSM 10664 / DCB-2) protein is ATP synthase subunit alpha.